The following is a 190-amino-acid chain: Orotate phosphoribosyltransferase (190 aa).

114 to 122 contributes to the 5-phospho-alpha-D-ribose 1-diphosphate binding site; sequence EDVVTTGGS. The orotate site is built by T118 and R146.

This sequence belongs to the purine/pyrimidine phosphoribosyltransferase family. PyrE subfamily. In terms of assembly, homodimer. Mg(2+) serves as cofactor.

The enzyme catalyses orotidine 5'-phosphate + diphosphate = orotate + 5-phospho-alpha-D-ribose 1-diphosphate. It functions in the pathway pyrimidine metabolism; UMP biosynthesis via de novo pathway; UMP from orotate: step 1/2. In terms of biological role, catalyzes the transfer of a ribosyl phosphate group from 5-phosphoribose 1-diphosphate to orotate, leading to the formation of orotidine monophosphate (OMP). The sequence is that of Orotate phosphoribosyltransferase from Caldanaerobacter subterraneus subsp. tengcongensis (strain DSM 15242 / JCM 11007 / NBRC 100824 / MB4) (Thermoanaerobacter tengcongensis).